Consider the following 373-residue polypeptide: 3-isopropylmalate dehydrogenase AMT6 (373 aa).

77–79 lines the NADP(+) pocket; sequence VGG. Arg-97 and Arg-136 together coordinate substrate. Mg(2+) is bound by residues Asp-227, Asp-252, and Asp-256. 284–289 lines the NADP(+) pocket; the sequence is SRIRGL.

This sequence belongs to the isocitrate and isopropylmalate dehydrogenases family. As to quaternary structure, homodimer. It depends on Mg(2+) as a cofactor. Mn(2+) is required as a cofactor.

It carries out the reaction (2R,3S)-3-isopropylmalate + NAD(+) = 4-methyl-2-oxopentanoate + CO2 + NADH. It participates in amino-acid biosynthesis; L-leucine biosynthesis; L-leucine from 3-methyl-2-oxobutanoate: step 3/4. It functions in the pathway mycotoxin biosynthesis. Functionally, 3-isopropylmalate dehydrogenase; part of the gene clusters that mediate the biosynthesis of AM-toxins, host-selective toxins (HSTs) causing Alternaria blotch on apple, a worldwide distributed disease. AM-toxins are cyclic depsipeptides containing the 3 residues 2-hydroxy-isovaleric acid (2-HIV), dehydroalanine, L-alanine which are common for all 3 AM-toxins I to III. The fourth precursor is L-alpha-amino-methoxyphenyl-valeric acid (L-Amv) for AM-toxin I, L-alpha-amino-phenyl-valeric acid (L-Apv) for AM-toxin II, and L-alpha-amino-hydroxyphenyl-valeric acid (L-Ahv) for AM-toxin III. AM-toxins have two target sites for affecting susceptible apple cells; they cause invagination of the plasma membrane and electrolyte loss and chloroplast disorganization. The non-ribosomal peptide synthetase AMT1 contains 4 catalytic modules and is responsible for activation of each residue in AM-toxin. The aldo-keto reductase AMT2 catalyzes the conversion of 2-keto-isovaleric acid (2-KIV) to 2-hydroxy-isovaleric acid (2-HIV), one of the precursor residues incorporated by AMT1 during AM-toxin biosynthesis, by reduction of its ketone to an alcohol. The cytochrome P450 monooxygenase AMT3 and the thioesterase AMT4 are also important for AM-toxin production, but their exact function within the AM-toxin biosynthesis are not known yet. Up to 21 proteins (including AMT1 to AMT4) are predicted to be involved in AM-toxin biosynthesis since their expression ishighly up-regulated in AM-toxin-producing cultures. In Alternaria alternata (Alternaria rot fungus), this protein is 3-isopropylmalate dehydrogenase AMT6.